The chain runs to 88 residues: RNA-binding protein Hfq (88 aa).

A Sm domain is found at 10 to 70 (DRFLNILRTK…ISTILPAEYI (61 aa)).

This sequence belongs to the Hfq family. Homohexamer.

Functionally, RNA chaperone that binds small regulatory RNA (sRNAs) and mRNAs to facilitate mRNA translational regulation in response to envelope stress, environmental stress and changes in metabolite concentrations. Also binds with high specificity to tRNAs. The chain is RNA-binding protein Hfq from Fervidobacterium nodosum (strain ATCC 35602 / DSM 5306 / Rt17-B1).